Reading from the N-terminus, the 137-residue chain is ATP synthase epsilon chain, chloroplastic (137 aa).

Belongs to the ATPase epsilon chain family. As to quaternary structure, F-type ATPases have 2 components, CF(1) - the catalytic core - and CF(0) - the membrane proton channel. CF(1) has five subunits: alpha(3), beta(3), gamma(1), delta(1), epsilon(1). CF(0) has three main subunits: a, b and c.

It localises to the plastid. It is found in the chloroplast thylakoid membrane. In terms of biological role, produces ATP from ADP in the presence of a proton gradient across the membrane. The protein is ATP synthase epsilon chain, chloroplastic of Hordeum vulgare (Barley).